The following is a 413-amino-acid chain: F-box/kelch-repeat protein At5g26960 (413 aa).

The 50-residue stretch at 41–90 folds into the F-box domain; sequence SATIASLPDDLLLECISRVPSSSIPSLAVVCRRWSRLLHSPYFLHLRRRL. 5 Kelch repeats span residues 96–141, 152–191, 192–238, 240–295, and 367–413; these read SLFA…YGSL, RVYVVSRNAVLRYDSWMGTLNLRSPMIFPRKKFAIAVVSG, KIYV…AVDG, FYVI…AAVG, and LLRR…CVEW.

The protein is F-box/kelch-repeat protein At5g26960 of Arabidopsis thaliana (Mouse-ear cress).